We begin with the raw amino-acid sequence, 177 residues long: MNFKQYSPEELKECSMIEVVHSVLGDKRQATTFNELVQEIAQVLGLSQEQVNAKLAQFYTDLNIDGRFINLGENRWGLRSWYPYEQIDEEILPQPKPKKKRKVEEDGFDDYIEEDEDDFDDADGNADEEDDVEDLDKVLEEEDGDDDDLDDLEEDEEDDFAEEELEYDETEEEEEEL.

Residues 14 to 81 (CSMIEVVHSV…GENRWGLRSW (68 aa)) form the HTH HARE-type domain. The disordered stretch occupies residues 91 to 177 (ILPQPKPKKK…DETEEEEEEL (87 aa)). The segment covering 106 to 177 (DGFDDYIEED…DETEEEEEEL (72 aa)) has biased composition (acidic residues).

It belongs to the RpoE family. RNAP is composed of a core of 2 alpha, a beta and a beta' subunits. The core is associated with a delta subunit and one of several sigma factors.

In terms of biological role, participates in both the initiation and recycling phases of transcription. In the presence of the delta subunit, RNAP displays an increased specificity of transcription, a decreased affinity for nucleic acids, and an increased efficiency of RNA synthesis because of enhanced recycling. This chain is Probable DNA-directed RNA polymerase subunit delta, found in Bacillus cereus (strain G9842).